Reading from the N-terminus, the 514-residue chain is 3-octaprenyl-4-hydroxybenzoate carboxy-lyase (514 aa).

Mn(2+) is bound at residue N177. Prenylated FMN is bound by residues 180–182 (IYR), 194–196 (RWL), and 199–200 (RG). E243 is a binding site for Mn(2+). D314 acts as the Proton donor in catalysis.

Belongs to the UbiD family. As to quaternary structure, homohexamer. Requires prenylated FMN as cofactor. Mn(2+) is required as a cofactor.

The protein localises to the cell membrane. It carries out the reaction a 4-hydroxy-3-(all-trans-polyprenyl)benzoate + H(+) = a 2-(all-trans-polyprenyl)phenol + CO2. Its pathway is cofactor biosynthesis; ubiquinone biosynthesis. In terms of biological role, catalyzes the decarboxylation of 3-octaprenyl-4-hydroxy benzoate to 2-octaprenylphenol, an intermediate step in ubiquinone biosynthesis. The protein is 3-octaprenyl-4-hydroxybenzoate carboxy-lyase of Bordetella parapertussis (strain 12822 / ATCC BAA-587 / NCTC 13253).